A 316-amino-acid polypeptide reads, in one-letter code: Nautilin-63 (316 aa).

Disordered stretches follow at residues 1–26, 149–173, 189–238, and 259–278; these read IPDLASSRSTLPVLTKGPTGLLGPRG, PFPTSRSTYGPSGSQPGKKGVVTPF, DSRC…GIAS, and PPTSPFFTGPSGYTSDGLNK. Over residues 10–26 the composition is skewed to low complexity; the sequence is TLPVLTKGPTGLLGPRG. Composition is skewed to polar residues over residues 152-163, 207-216, and 269-278; these read TSRSTYGPSGSQ, GHSSPATLNS, and SGYTSDGLNK.

Glycosylated; contains mainly glucose, galactose, galactosamine, glucosamine and glucuronic acid. Component of the acid-soluble organic matrix of nacreous shell layers (at protein level).

It localises to the secreted. In terms of biological role, involved in nacre formation. Affects morphology of calcite crystals in vitro but does not inhibit their formation. Binds chitin. The chain is Nautilin-63 from Nautilus macromphalus (Bellybutton nautilus).